The following is a 357-amino-acid chain: Eukaryotic translation initiation factor 3 subunit F (357 aa).

An MPN domain is found at 30 to 169; it reads VHIQPQAVFS…TKAYISAPVA (140 aa). Residues 309–357 are disordered; that stretch reads VGGDKEGGEKGKDGEDGGRGGRGGKRGGGGRGGHRGEPREPREPREPAE. Basic and acidic residues-rich tracts occupy residues 311-327 and 342-357; these read GDKE…DGGR and HRGE…EPAE.

This sequence belongs to the eIF-3 subunit F family. As to quaternary structure, component of the eukaryotic translation initiation factor 3 (eIF-3) complex.

The protein resides in the cytoplasm. Component of the eukaryotic translation initiation factor 3 (eIF-3) complex, which is involved in protein synthesis of a specialized repertoire of mRNAs and, together with other initiation factors, stimulates binding of mRNA and methionyl-tRNAi to the 40S ribosome. The eIF-3 complex specifically targets and initiates translation of a subset of mRNAs involved in cell proliferation. In Chaetomium globosum (strain ATCC 6205 / CBS 148.51 / DSM 1962 / NBRC 6347 / NRRL 1970) (Soil fungus), this protein is Eukaryotic translation initiation factor 3 subunit F.